A 179-amino-acid polypeptide reads, in one-letter code: Replication restart protein DnaT (179 aa).

The tract at residues 156-179 (GGLPKRDVNTVSEPDSQIPPGFRG) is disordered.

Belongs to the DnaT family. In terms of assembly, homooligomerizes. Interacts with PriB. Component of the replication restart primosome. Primosome assembly occurs via a 'hand-off' mechanism. PriA binds to replication forks, subsequently PriB then DnaT bind; DnaT then displaces ssDNA to generate the helicase loading substrate.

In terms of biological role, involved in the restart of stalled replication forks, which reloads the replicative helicase on sites other than the origin of replication. Can function in multiple replication restart pathways. Displaces ssDNA from a PriB-ssDNA complex. Probably forms a spiral filament on ssDNA. The protein is Replication restart protein DnaT of Escherichia coli O17:K52:H18 (strain UMN026 / ExPEC).